The chain runs to 419 residues: Creatine kinase S-type, mitochondrial (419 aa).

The N-terminal 39 residues, 1–39 (MAGTFGRLLAGRVTAALFAAAGSGVLTTGYLLNQQNVKA), are a transit peptide targeting the mitochondrion. Residues 46–132 (KLFPPSADYP…FDPVIKARHN (87 aa)) enclose the Phosphagen kinase N-terminal domain. Residues 159–401 (YVLSSRVRTG…NYLVDCEKKL (243 aa)) form the Phosphagen kinase C-terminal domain. ATP is bound by residues 162-166 (SSRVR), H225, R270, R326, 354-359 (RGTGGV), and D369.

The protein belongs to the ATP:guanido phosphotransferase family. As to quaternary structure, exists as an octamer composed of four MTCK homodimers. Expressed in the leg muscle and heart.

The protein resides in the mitochondrion inner membrane. It carries out the reaction creatine + ATP = N-phosphocreatine + ADP + H(+). In terms of biological role, reversibly catalyzes the transfer of phosphate between ATP and various phosphogens (e.g. creatine phosphate). Creatine kinase isoenzymes play a central role in energy transduction in tissues with large, fluctuating energy demands, such as skeletal muscle, heart, brain and spermatozoa. The chain is Creatine kinase S-type, mitochondrial (CKMT2) from Gallus gallus (Chicken).